The primary structure comprises 332 residues: Isopentenyl-diphosphate delta-isomerase (332 aa).

Arg-6 to Lys-7 is a substrate binding site. Residues Ala-65–Thr-67, Ser-95, and Asn-123 contribute to the FMN site. Ser-95–Arg-97 contacts substrate. Substrate is bound at residue Gln-157. Glu-158 is a Mg(2+) binding site. Residues Lys-187, Thr-217, Gly-264–Tyr-266, Ala-285, and Ala-285–Arg-286 each bind FMN.

Belongs to the IPP isomerase type 2 family. In terms of assembly, homooctamer. Dimer of tetramers. Requires FMN as cofactor. NADPH serves as cofactor. The cofactor is Mg(2+).

The protein localises to the cytoplasm. The catalysed reaction is isopentenyl diphosphate = dimethylallyl diphosphate. With respect to regulation, competitively inhibited by N,N-dimethyl-2-amino-1-ethyl diphosphate (NIPP) and isopentyl diphosphate. Functionally, involved in the biosynthesis of isoprenoids. Catalyzes the 1,3-allylic rearrangement of the homoallylic substrate isopentenyl (IPP) to its allylic isomer, dimethylallyl diphosphate (DMAPP). The sequence is that of Isopentenyl-diphosphate delta-isomerase from Thermus thermophilus (strain ATCC BAA-163 / DSM 7039 / HB27).